The sequence spans 809 residues: Phenylalanine--tRNA ligase beta subunit (809 aa).

A tRNA-binding domain is found at 39–152; sequence KDKWPNVYVG…ADAPVGMLAS (114 aa). In terms of domain architecture, B5 spans 404-492; that stretch reads KDRNSVVLSL…RIAGYDTIPC (89 aa). 4 residues coordinate Mg(2+): Asp-470, Asp-476, Glu-479, and Glu-480. The FDX-ACB domain maps to 717–808; the sequence is NRFPSVERDL…LNTETGAVLR (92 aa).

The protein belongs to the phenylalanyl-tRNA synthetase beta subunit family. Type 1 subfamily. Tetramer of two alpha and two beta subunits. The cofactor is Mg(2+).

Its subcellular location is the cytoplasm. The enzyme catalyses tRNA(Phe) + L-phenylalanine + ATP = L-phenylalanyl-tRNA(Phe) + AMP + diphosphate + H(+). In Dehalococcoides mccartyi (strain ATCC BAA-2266 / KCTC 15142 / 195) (Dehalococcoides ethenogenes (strain 195)), this protein is Phenylalanine--tRNA ligase beta subunit.